The chain runs to 322 residues: Olfactory receptor 1J1 (322 aa).

Over 1 to 25 the chain is Extracellular; sequence MSPENQSSVSEFLLLGLPIRPEQQA. Asparagine 5 carries an N-linked (GlcNAc...) asparagine glycan. The chain crosses the membrane as a helical span at residues 26–49; that stretch reads VFFALFLGMYLTTVLGNLLIMLLI. Residues 50–57 are Cytoplasmic-facing; it reads QLDSHLHT. A helical membrane pass occupies residues 58-79; it reads PMYFFLSHLALTDISFSSVTVP. At 80–100 the chain is on the extracellular side; it reads KMLMNMQTQHLAVFYKGCISQ. Cysteine 97 and cysteine 189 form a disulfide bridge. The helical transmembrane segment at 101–120 threads the bilayer; the sequence is TYFFIFFADLDSFLITSMAY. Over 121 to 139 the chain is Cytoplasmic; sequence DRYVAICHPLHYATIMTQS. The helical transmembrane segment at 140-158 threads the bilayer; it reads QCVMLVAGSWVIACACALL. Topologically, residues 159 to 196 are extracellular; it reads HTLLLAQLSFCADHIIPHYFCDLGALLKLSCSDTSLNQ. The chain crosses the membrane as a helical span at residues 197-219; it reads LAIFTAALTAIMLPFLCILVSYG. Over 220–236 the chain is Cytoplasmic; the sequence is HIGVTILQIPSTKGICK. Residues 237-259 traverse the membrane as a helical segment; sequence ALSTCGSHLSVVTIYYRTIIGLY. Residues 260–272 lie on the Extracellular side of the membrane; sequence FLPPSSNTNDKNI. The helical transmembrane segment at 273–292 threads the bilayer; that stretch reads IASVIYTAVTPMLNPFIYSL. Residues 293–322 lie on the Cytoplasmic side of the membrane; it reads RNKDIKGALRKLLSRSGAVAHACNLNTLGG.

It belongs to the G-protein coupled receptor 1 family.

The protein localises to the cell membrane. Odorant receptor. This chain is Olfactory receptor 1J1, found in Homo sapiens (Human).